The chain runs to 317 residues: Melanocyte-stimulating hormone receptor (317 aa).

The Extracellular segment spans residues 1 to 37 (MPVQGSQRRLLGSLNSTPTAPPHLGLAANQTGARCLE). Asn-29 is a glycosylation site (N-linked (GlcNAc...) asparagine). Residues 38 to 63 (VSIPDGLFLSLGLVSLVENVLVVTAI) form a helical membrane-spanning segment. At 64-72 (AKNRNLHSP) the chain is on the cytoplasmic side. A helical membrane pass occupies residues 73–93 (MYCFICCLALSDLLVSGSNML). Residues 94–118 (ETAVILLLEAGALAARAAVVQQLDN) are Extracellular-facing. Residues 119–140 (VIDVITCSSMLSSLCFLGAIAV) traverse the membrane as a helical segment. Topologically, residues 141-163 (DRYISIFYALRYHSIVTLPRARR) are cytoplasmic. The chain crosses the membrane as a helical span at residues 164–183 (AVAAIWVASVLFSMLFIAYY). Over 184–191 (DHAAVLLC) the chain is Extracellular. The helical transmembrane segment at 192–211 (LVVFFLAMLVLMAVLYIHML) threads the bilayer. The Cytoplasmic segment spans residues 212-240 (VRACQHAQGIARLHKRQRPAHQGFGLKGA). The helical transmembrane segment at 241–266 (ATLTILLGIFFLCWGPFFLHLTLIVL) threads the bilayer. Topologically, residues 267–279 (CPQHPTCSCIFKN) are extracellular. A helical transmembrane segment spans residues 280-300 (FNLFLALIICNAIIDPLIYAF). The Cytoplasmic portion of the chain corresponds to 301–317 (RSQELRRTLKEVLLCSW). The S-palmitoyl cysteine moiety is linked to residue Cys-315.

It belongs to the G-protein coupled receptor 1 family. In terms of assembly, interacts with MGRN1, but does not undergo MGRN1-mediated ubiquitination; this interaction competes with GNAS-binding and thus inhibits agonist-induced cAMP production. Interacts with OPN3; the interaction results in a decrease in MC1R-mediated cAMP signaling and ultimately a decrease in melanin production in melanocytes.

Its subcellular location is the cell membrane. Receptor for MSH (alpha, beta and gamma) and ACTH. The activity of this receptor is mediated by G proteins which activate adenylate cyclase. Mediates melanogenesis, the production of eumelanin (black/brown) and phaeomelanin (red/yellow), via regulation of cAMP signaling in melanocytes. This is Melanocyte-stimulating hormone receptor (MC1R) from Cercopithecus diana (Diana monkey).